We begin with the raw amino-acid sequence, 360 residues long: Peptide chain release factor 1 (360 aa).

Position 235 is an N5-methylglutamine (Gln235).

It belongs to the prokaryotic/mitochondrial release factor family. In terms of processing, methylated by PrmC. Methylation increases the termination efficiency of RF1.

The protein localises to the cytoplasm. Its function is as follows. Peptide chain release factor 1 directs the termination of translation in response to the peptide chain termination codons UAG and UAA. The protein is Peptide chain release factor 1 of Blochmanniella pennsylvanica (strain BPEN).